The primary structure comprises 311 residues: Homeobox-leucine zipper protein HOX1 (311 aa).

2 disordered regions span residues 29–69 (AGGA…SDHR) and 97–160 (AETT…KKLR). The segment covering 119–145 (SSPNSTLSSLSGKRGAPSAATAAAAAA) has biased composition (low complexity). Positions 154 to 213 (GSRKKLRLSKDQAAVLEDTFKEHNTLNPKQKAALARQLNLKPRQVEVWFQNRRARTKLKQ) form a DNA-binding region, homeobox. Positions 212–256 (KQTEVDCELLKRCCETLTDENRRLHRELQELRALKLATAAAAPHH) are leucine-zipper. Residues 279–311 (SAATTTRNNSGAAPARPVPTRPWPPAAAQRSSA) form a disordered region. Positions 280–289 (AATTTRNNSG) are enriched in polar residues. Residues 294–303 (RPVPTRPWPP) show a composition bias toward pro residues.

Belongs to the HD-ZIP homeobox family. Class II subfamily. As to quaternary structure, homodimer. May form a heterodimer with HOX2, HOX3 or HOX7. Expressed in root provascular and vascular cylinder, provascular and vascular strands of leaves, provascular and vascular strands of the whole panicle, in mature embryo provascular bundles of scutellum and embryonic axis and provascular and vascular strands of young immature spikelet organs. Expressed in differentiating and differentiated xylem and phloem elements, and in outer and inner bundle sheath cells of all vascular bundles. Expressed in auricles, ligules, culm, guard cells brac hairs and pollen.

It is found in the nucleus. Its function is as follows. Probable transcription repressor involved leaf development. Binds to the DNA sequence 5'-CAAT[GC]ATTG-3'. May act as a regulatory switch to specify provascular cell fate. The polypeptide is Homeobox-leucine zipper protein HOX1 (HOX1) (Oryza sativa subsp. indica (Rice)).